The chain runs to 198 residues: NADH-quinone oxidoreductase subunit B (198 aa).

Positions 1-20 are enriched in polar residues; that stretch reads MGLNPTQVSTSGSPQVSQPA. Positions 1 to 29 are disordered; sequence MGLNPTQVSTSGSPQVSQPATGVLDPRTG. The [4Fe-4S] cluster site is built by Cys77, Cys78, Cys142, and Cys172.

The protein belongs to the complex I 20 kDa subunit family. NDH-1 is composed of 14 different subunits. Subunits NuoB, C, D, E, F, and G constitute the peripheral sector of the complex. Requires [4Fe-4S] cluster as cofactor.

It is found in the cell inner membrane. The enzyme catalyses a quinone + NADH + 5 H(+)(in) = a quinol + NAD(+) + 4 H(+)(out). Functionally, NDH-1 shuttles electrons from NADH, via FMN and iron-sulfur (Fe-S) centers, to quinones in the respiratory chain. The immediate electron acceptor for the enzyme in this species is believed to be ubiquinone. Couples the redox reaction to proton translocation (for every two electrons transferred, four hydrogen ions are translocated across the cytoplasmic membrane), and thus conserves the redox energy in a proton gradient. The polypeptide is NADH-quinone oxidoreductase subunit B (Afipia carboxidovorans (strain ATCC 49405 / DSM 1227 / KCTC 32145 / OM5) (Oligotropha carboxidovorans)).